A 361-amino-acid polypeptide reads, in one-letter code: Deoxyribonuclease-2-beta (361 aa).

Positions 1-27 are cleaved as a signal peptide; that stretch reads MKQKMMARLLRTSFALLFLGLFGVLGA. N-linked (GlcNAc...) asparagine glycosylation is found at N81, N103, N119, and N278.

The protein belongs to the DNase II family. As to expression, highly expressed in the eye lens and in salivary gland. Detected at lower levels in lung, prostate and lymph node. Isoform 2 is lung specific.

The protein resides in the lysosome. The enzyme catalyses Endonucleolytic cleavage to nucleoside 3'-phosphates and 3'-phosphooligonucleotide end-products.. Functionally, hydrolyzes DNA under acidic conditions. Does not require divalent cations for activity. Participates in the degradation of nuclear DNA during lens cell differentiation. This Homo sapiens (Human) protein is Deoxyribonuclease-2-beta (DNASE2B).